The chain runs to 140 residues: Cystatin-C (140 aa).

A signal peptide spans 1–20; sequence MASPLRSLLFLLAVLAVAWA. The short motif at 75–79 is the Secondary area of contact element; the sequence is QLVAG. 2 disulfides stabilise this stretch: Cys-93/Cys-103 and Cys-117/Cys-137.

This sequence belongs to the cystatin family.

It localises to the secreted. Its function is as follows. As an inhibitor of cysteine proteinases, this protein is thought to serve an important physiological role as a local regulator of this enzyme activity. This is Cystatin-C (Cst3) from Mus musculus (Mouse).